We begin with the raw amino-acid sequence, 193 residues long: Orotate phosphoribosyltransferase (193 aa).

Residue 114-122 (EDVITTGGS) coordinates 5-phospho-alpha-D-ribose 1-diphosphate. Orotate-binding residues include Thr-118 and Arg-146.

It belongs to the purine/pyrimidine phosphoribosyltransferase family. PyrE subfamily. In terms of assembly, homodimer. It depends on Mg(2+) as a cofactor.

It catalyses the reaction orotidine 5'-phosphate + diphosphate = orotate + 5-phospho-alpha-D-ribose 1-diphosphate. Its pathway is pyrimidine metabolism; UMP biosynthesis via de novo pathway; UMP from orotate: step 1/2. Functionally, catalyzes the transfer of a ribosyl phosphate group from 5-phosphoribose 1-diphosphate to orotate, leading to the formation of orotidine monophosphate (OMP). The protein is Orotate phosphoribosyltransferase of Chlorobium phaeobacteroides (strain DSM 266 / SMG 266 / 2430).